We begin with the raw amino-acid sequence, 228 residues long: E3 ubiquitin-protein ligase RNF114 (228 aa).

The segment at cysteine 29–arginine 68 adopts an RING-type zinc-finger fold. Residues cysteine 91 and cysteine 94 each contribute to the Zn(2+) site. A C2HC RNF-type zinc finger spans residues cysteine 91–cysteine 110. An N6-acetyllysine modification is found at lysine 102. The Zn(2+) site is built by histidine 106 and cysteine 110. Lysine 112 is modified (N6-acetyllysine).

In terms of assembly, interacts with XAF1, the interaction increases XAF1 stability and proapoptotic effects, and may regulate IFN signaling. In terms of processing, autoubiquitinated. Polyubiquitinated in the presence of E2 enzymes UBE2D1, UBE2D2 and UBE2D3, but only monoubiquitinated in the presence of UBE2E1. Expressed in numerous tissues, including skin, CD4 lymphocytes and dendritic cells. Highest levels in testis.

It is found in the cytoplasm. It localises to the nucleus. The catalysed reaction is S-ubiquitinyl-[E2 ubiquitin-conjugating enzyme]-L-cysteine + [acceptor protein]-L-lysine = [E2 ubiquitin-conjugating enzyme]-L-cysteine + N(6)-ubiquitinyl-[acceptor protein]-L-lysine.. It functions in the pathway protein modification; protein ubiquitination. E3 ubiquitin-protein ligase that promotes the ubiquitination of various substrates. In turn, participates in the regulation of many biological processes including cell cycle, apoptosis, osteoclastogenesis as well as innate or adaptive immunity. Acts as a negative regulator of NF-kappa-B-dependent transcription by promoting the ubiquitination and stabilization of the NF-kappa-B inhibitor TNFAIP3. May promote the ubiquitination of TRAF6 as well. Also acts as a negative regulator of T-cell activation. Inhibits cellular dsRNA responses and interferon production by targeting MAVS component for proteasomal degradation. Ubiquitinates the CDK inhibitor CDKN1A leading to its degradationand probably also CDKN1B and CDKN1C. This activity stimulates cell cycle G1-to-S phase transition and suppresses cellular senescence. May play a role in spermatogenesis. The sequence is that of E3 ubiquitin-protein ligase RNF114 (RNF114) from Homo sapiens (Human).